The following is a 210-amino-acid chain: Cytochrome c4 (210 aa).

Residues 1–20 (MNKVLVSLLLTLGITGMAHA) form the signal peptide. Heme c contacts are provided by Cys34, Cys37, His38, Met86, Cys139, Cys142, His143, and Met187.

Binds 2 heme c groups covalently per subunit.

It is found in the periplasm. Functionally, diheme, high potential cytochrome c believed to be an intermediate electron donor to terminal oxidation systems. The sequence is that of Cytochrome c4 (cc4) from Stutzerimonas stutzeri (Pseudomonas stutzeri).